Reading from the N-terminus, the 174-residue chain is Secreted cysteine-rich protein UMAG_00792 (174 aa).

The N-terminal stretch at 1 to 26 (MVSFKSSSLFLHSLSALLVLTTLSSA) is a signal peptide. Asparagine 77 carries N-linked (GlcNAc...) asparagine glycosylation.

As to quaternary structure, secreted cysteine-rich proteins (SCRPs) are predicted to form amyloids.

It localises to the secreted. Functionally, secreted cysteine-rich protein that might form amyloid strutures which are involved in attachment to hydrophobic surfaces and in formation of hydrophobic aerial hyphae. The protein is Secreted cysteine-rich protein UMAG_00792 of Mycosarcoma maydis (Corn smut fungus).